Reading from the N-terminus, the 447-residue chain is MKGYEVNFDGLVGPTHHYAGLSFGNEASTKNCNNLSNPKLAAKQGLLKMKALADMGMKQGVLAPHERPHVPMLRRLGFTGDDISVVAQAMRYSPELLSSLSSASPMWTANAATVSPSADSQDERVHFTAANLNNKFHRSIEAETTSQVLQAIFKNERHFVHHEALPQVALFGDEGAANHNRLGGDYAKRGVQVFVYGQQHLNNGLPGPKRYPARQTREASEAIARLHRLDESHTVFVQQNPDVIDQGVFHNDVIAVSNQQVSFHHQHAFLNQDQAFAEIRQKMASIGEDFISIEVPENRVTVDDAVATYLFNSQILTRPDGGMTIVVPEESRQNAAVWSYLNDMIQMGTPIDAIQVYDLRESMRNGGGPACLRLRVALNETELNAVNPKVLMNDQLFMTLNQWVDKHYRDRLAQEDLADPHLLMESRMAFDELTKILGLGSVYPFQK.

Residues 19 to 28, asparagine 110, and 137 to 138 each bind substrate; these read AGLSFGNEAS and HR. Residue glutamate 174 is part of the active site. Substrate is bound at residue arginine 214. Residue histidine 250 is part of the active site. Substrate is bound by residues aspartate 252 and asparagine 365. The active-site Nucleophile is the cysteine 371.

This sequence belongs to the succinylarginine dihydrolase family. Homodimer.

The catalysed reaction is N(2)-succinyl-L-arginine + 2 H2O + 2 H(+) = N(2)-succinyl-L-ornithine + 2 NH4(+) + CO2. It participates in amino-acid degradation; L-arginine degradation via AST pathway; L-glutamate and succinate from L-arginine: step 2/5. In terms of biological role, catalyzes the hydrolysis of N(2)-succinylarginine into N(2)-succinylornithine, ammonia and CO(2). This Acinetobacter baumannii (strain SDF) protein is N-succinylarginine dihydrolase.